We begin with the raw amino-acid sequence, 99 residues long: Malonate decarboxylase acyl carrier protein (99 aa).

The residue at position 25 (S25) is an O-(phosphoribosyl dephospho-coenzyme A)serine.

It belongs to the MdcC family. Covalently binds the prosthetic group of malonate decarboxylase.

Its subcellular location is the cytoplasm. Functionally, subunit of malonate decarboxylase, it is an acyl carrier protein to which acetyl and malonyl thioester residues are bound via a 2'-(5''-phosphoribosyl)-3'-dephospho-CoA prosthetic group and turn over during the catalytic mechanism. The polypeptide is Malonate decarboxylase acyl carrier protein (Pseudomonas savastanoi pv. phaseolicola (strain 1448A / Race 6) (Pseudomonas syringae pv. phaseolicola (strain 1448A / Race 6))).